The following is a 424-amino-acid chain: Phosphomethylpyrimidine synthase (424 aa).

Substrate is bound by residues methionine 94, tyrosine 123, histidine 162, 184 to 186, 225 to 228, and glutamate 264; these read SRG and NGMR. A Zn(2+)-binding site is contributed by histidine 268. Residue tyrosine 291 coordinates substrate. A Zn(2+)-binding site is contributed by histidine 332. The [4Fe-4S] cluster site is built by cysteine 406, cysteine 409, and cysteine 413.

This sequence belongs to the ThiC family. [4Fe-4S] cluster serves as cofactor.

It catalyses the reaction 5-amino-1-(5-phospho-beta-D-ribosyl)imidazole + S-adenosyl-L-methionine = 4-amino-2-methyl-5-(phosphooxymethyl)pyrimidine + CO + 5'-deoxyadenosine + formate + L-methionine + 3 H(+). The protein operates within cofactor biosynthesis; thiamine diphosphate biosynthesis. Catalyzes the synthesis of the hydroxymethylpyrimidine phosphate (HMP-P) moiety of thiamine from aminoimidazole ribotide (AIR) in a radical S-adenosyl-L-methionine (SAM)-dependent reaction. In Methanosphaerula palustris (strain ATCC BAA-1556 / DSM 19958 / E1-9c), this protein is Phosphomethylpyrimidine synthase.